A 477-amino-acid polypeptide reads, in one-letter code: Cysteine--tRNA ligase (477 aa).

C28 serves as a coordination point for Zn(2+). Residues 30-40 (PTVYDYPHLGH) carry the 'HIGH' region motif. Zn(2+) is bound by residues C208, H233, and E237. Positions 265–269 (KMSKS) match the 'KMSKS' region motif. An ATP-binding site is contributed by K268.

This sequence belongs to the class-I aminoacyl-tRNA synthetase family. It depends on Zn(2+) as a cofactor.

It is found in the cytoplasm. It carries out the reaction tRNA(Cys) + L-cysteine + ATP = L-cysteinyl-tRNA(Cys) + AMP + diphosphate. The polypeptide is Cysteine--tRNA ligase (Pyrococcus furiosus (strain ATCC 43587 / DSM 3638 / JCM 8422 / Vc1)).